The chain runs to 119 residues: Ribonuclease P protein component (119 aa).

It belongs to the RnpA family. In terms of assembly, consists of a catalytic RNA component (M1 or rnpB) and a protein subunit.

The catalysed reaction is Endonucleolytic cleavage of RNA, removing 5'-extranucleotides from tRNA precursor.. Its function is as follows. RNaseP catalyzes the removal of the 5'-leader sequence from pre-tRNA to produce the mature 5'-terminus. It can also cleave other RNA substrates such as 4.5S RNA. The protein component plays an auxiliary but essential role in vivo by binding to the 5'-leader sequence and broadening the substrate specificity of the ribozyme. This is Ribonuclease P protein component from Erwinia tasmaniensis (strain DSM 17950 / CFBP 7177 / CIP 109463 / NCPPB 4357 / Et1/99).